The sequence spans 389 residues: Phospholipid phosphatase-related protein type 2 (389 aa).

The next 2 membrane-spanning stretches (helical) occupy residues 14-34 and 66-86; these read IIPC…AFFP and FLGV…AGQV. A glycan (N-linked (GlcNAc...) asparagine) is linked at Asn102. 3 helical membrane-spanning segments follow: residues 147 to 167, 176 to 196, and 203 to 223; these read AALC…VFRV, SLCL…VAEY, and VLAG…CVVH. Phosphoserine occurs at positions 236 and 249. 2 disordered regions span residues 255–280 and 295–351; these read SVAQ…PQNC and APAM…GRKL. A compositionally biased stretch (polar residues) spans 265 to 278; sequence SHSTPARLTPSKPQ. The segment covering 314 to 339 has biased composition (pro residues); it reads TPLPLPLPLPAPAPSQGPSPSSPGPG.

This sequence belongs to the PA-phosphatase related phosphoesterase family.

The protein localises to the membrane. The polypeptide is Phospholipid phosphatase-related protein type 2 (Bos taurus (Bovine)).